The following is a 212-amino-acid chain: Adenylate kinase (212 aa).

Residue 14 to 19 (GSGKGT) coordinates ATP. Residues 34–63 (STGDLFRKKISEDSQFAAQIQNYLSSGSYV) form an NMP region. AMP contacts are provided by residues threonine 35, arginine 40, 61–63 (SYV), 89–92 (GYPR), and glutamine 96. The segment at 126–163 (QRLFCQKCQKSYNLLLAKPKNGLKCDLDNTDLITRNDD) is LID. Residue arginine 127 participates in ATP binding. Positions 130 and 133 each coordinate Zn(2+). Position 136–137 (136–137 (SY)) interacts with ATP. Zn(2+) is bound by residues cysteine 150 and aspartate 153. Residues arginine 160 and arginine 171 each contribute to the AMP site. Glutamine 199 provides a ligand contact to ATP.

It belongs to the adenylate kinase family. In terms of assembly, monomer.

It is found in the cytoplasm. It catalyses the reaction AMP + ATP = 2 ADP. The protein operates within purine metabolism; AMP biosynthesis via salvage pathway; AMP from ADP: step 1/1. Functionally, catalyzes the reversible transfer of the terminal phosphate group between ATP and AMP. Plays an important role in cellular energy homeostasis and in adenine nucleotide metabolism. The chain is Adenylate kinase from Mesomycoplasma hyopneumoniae (strain 7448) (Mycoplasma hyopneumoniae).